Here is a 213-residue protein sequence, read N- to C-terminus: MKLGLLGGTFNPIHLAHLRIAEEAREAAGLDQVLFIPAADPPHKPLAGDVSFELRAAMVQRAIAANPAFRFSDIEAHRAGKSYTVDTLTALRTARPGDELHFIIGSDSFLELGLWHRYADIFPLASLIVLERPEKAITEPLQQLPELVRDQFVQEAGNLVRHSSGTSIRFVIGTRLDISSSQLRERVARQQSIRYLVPPEIESFITQKGLYQP.

The protein belongs to the NadD family.

The enzyme catalyses nicotinate beta-D-ribonucleotide + ATP + H(+) = deamido-NAD(+) + diphosphate. The protein operates within cofactor biosynthesis; NAD(+) biosynthesis; deamido-NAD(+) from nicotinate D-ribonucleotide: step 1/1. In terms of biological role, catalyzes the reversible adenylation of nicotinate mononucleotide (NaMN) to nicotinic acid adenine dinucleotide (NaAD). The sequence is that of Probable nicotinate-nucleotide adenylyltransferase from Trichlorobacter lovleyi (strain ATCC BAA-1151 / DSM 17278 / SZ) (Geobacter lovleyi).